The following is a 93-amino-acid chain: Small ribosomal subunit protein uS17 (93 aa).

The protein belongs to the universal ribosomal protein uS17 family. Part of the 30S ribosomal subunit.

One of the primary rRNA binding proteins, it binds specifically to the 5'-end of 16S ribosomal RNA. The sequence is that of Small ribosomal subunit protein uS17 from Rhodococcus erythropolis (strain PR4 / NBRC 100887).